The primary structure comprises 271 residues: MSTHADSKPWTVPALAEAKRNGQKLVMLTAYDAGFARTFDANGVDLILIGDSLGMVVQGHDSTLPVTVADMVYHTRAVARVLQRALLVADLPFGADATPERALDASLQLLQAGAEMVKIEGAGFKVDIIRYLVEREIPVCAHLGLTPQSVLRLGGFKIQGRGDAARQLVEDARAVAAAGASIMVLECVPTPVAAEVTAAVDVPTIGIGAGPQCDGQVLVLHDFLGLDSGHRRPKFVKDFLAEGGSVAGATRAYADAVRDGSFPDEQHAYAQ.

Aspartate 51 and aspartate 90 together coordinate Mg(2+). 3-methyl-2-oxobutanoate-binding positions include 51–52 (DS), aspartate 90, and lysine 118. Glutamate 120 contacts Mg(2+). Glutamate 186 functions as the Proton acceptor in the catalytic mechanism.

It belongs to the PanB family. As to quaternary structure, homodecamer; pentamer of dimers. Mg(2+) serves as cofactor.

It is found in the cytoplasm. It carries out the reaction 3-methyl-2-oxobutanoate + (6R)-5,10-methylene-5,6,7,8-tetrahydrofolate + H2O = 2-dehydropantoate + (6S)-5,6,7,8-tetrahydrofolate. Its pathway is cofactor biosynthesis; (R)-pantothenate biosynthesis; (R)-pantoate from 3-methyl-2-oxobutanoate: step 1/2. Its function is as follows. Catalyzes the reversible reaction in which hydroxymethyl group from 5,10-methylenetetrahydrofolate is transferred onto alpha-ketoisovalerate to form ketopantoate. The polypeptide is 3-methyl-2-oxobutanoate hydroxymethyltransferase (Stenotrophomonas maltophilia (strain R551-3)).